The chain runs to 286 residues: Large ribosomal subunit protein uL3 (286 aa).

Gln-152 is subject to N5-methylglutamine. The segment covering 246-265 (EAAAAAAAAEEQAAMEAAEA) has biased composition (low complexity). The tract at residues 246-286 (EAAAAAAAAEEQAAMEAAEAAEAKTDTVAEAEAAEKKEGDA) is disordered. A compositionally biased stretch (basic and acidic residues) spans 266–286 (AEAKTDTVAEAEAAEKKEGDA).

This sequence belongs to the universal ribosomal protein uL3 family. Part of the 50S ribosomal subunit. Forms a cluster with proteins L14 and L19. Methylated by PrmB.

Its function is as follows. One of the primary rRNA binding proteins, it binds directly near the 3'-end of the 23S rRNA, where it nucleates assembly of the 50S subunit. In Roseobacter denitrificans (strain ATCC 33942 / OCh 114) (Erythrobacter sp. (strain OCh 114)), this protein is Large ribosomal subunit protein uL3.